Here is a 373-residue protein sequence, read N- to C-terminus: RNA 3'-terminal phosphate cyclase-like protein (373 aa).

Belongs to the RNA 3'-terminal cyclase family. Type 2 subfamily. As to quaternary structure, part of the small subunit (SSU) processome, composed of more than 70 proteins and the RNA chaperone small nucleolar RNA (snoRNA) U3. Interacts with BMS1.

Its subcellular location is the nucleus. The protein resides in the nucleolus. Its function is as follows. As part of the small subunit (SSU) processome, it plays a role in 40S-ribosomal-subunit biogenesis in the early pre-rRNA processing steps at sites A0, A1 and A2 that are required for proper maturation of the 18S RNA. Activates BMS1 by promoting GDP/GTP exchange. Does not have cyclase activity. This is RNA 3'-terminal phosphate cyclase-like protein (RCL1) from Bos taurus (Bovine).